The sequence spans 579 residues: MFS-type transporter sphD (579 aa).

The interval 17–62 (SAFAVRAEPDSEPVSEKQGTAETDAETGAGGTEVPAERNGEDDVER) is disordered. Over residues 51-62 (PAERNGEDDVER) the composition is skewed to basic and acidic residues. Helical transmembrane passes span 73–93 (AFIG…ALGI), 110–130 (FWAN…WASI), 138–158 (PPLY…AVAQ), 168–188 (VLQG…LADM), 200–220 (LMAI…ALFA), 227–247 (WIGW…FFFL), 267–287 (WIGM…LSWA), and 294–314 (GAWQ…IFAF). Residue Asn-335 is glycosylated (N-linked (GlcNAc...) asparagine). 6 helical membrane-spanning segments follow: residues 338–358 (LVGG…LPLI), 367–391 (AILS…SMML), 398–419 (YVWI…LALF), 429–449 (LGLP…LLPM), 460–480 (GLAI…GLTI), and 541–561 (FQTI…TSLF).

This sequence belongs to the major facilitator superfamily.

It localises to the membrane. Functionally, MFS-type transporter; part of the gene cluster that mediates the biosynthesis of sphingofungins, bioactive molecules acting as sphingolipid inhibitors via inhibiting serine palmitoyl transferase (SPT). This is MFS-type transporter sphD from Aspergillus fumigatus (strain CBS 144.89 / FGSC A1163 / CEA10) (Neosartorya fumigata).